The sequence spans 446 residues: Glutamyl-tRNA reductase (446 aa).

Substrate-binding positions include 49–52 (TCNR), Ser-109, 114–116 (ETQ), and Gln-120. Residue Cys-50 is the Nucleophile of the active site. Position 189–194 (189–194 (GAGEMA)) interacts with NADP(+).

The protein belongs to the glutamyl-tRNA reductase family. In terms of assembly, homodimer.

It catalyses the reaction (S)-4-amino-5-oxopentanoate + tRNA(Glu) + NADP(+) = L-glutamyl-tRNA(Glu) + NADPH + H(+). It functions in the pathway porphyrin-containing compound metabolism; protoporphyrin-IX biosynthesis; 5-aminolevulinate from L-glutamyl-tRNA(Glu): step 1/2. In terms of biological role, catalyzes the NADPH-dependent reduction of glutamyl-tRNA(Glu) to glutamate 1-semialdehyde (GSA). This is Glutamyl-tRNA reductase from Macrococcus caseolyticus (strain JCSC5402) (Macrococcoides caseolyticum).